A 253-amino-acid polypeptide reads, in one-letter code: MKKVITRENPTVEEVKELLDIAEKHGGVVTIFARCRVYYEGRAKSELGEGDRIVIIKPDGSFLIHQNKKREPVNWQPPGSKVSMRENSIISIRRKPHERLEVELMEVYAVTVFLAEDYEELALTGSEAEMAKLIFENPNVIEEGFKPMFREKQIKHGIVDIMGLDKDGNIVVLELKRRKADLHAVSQLKRYVDSLKEEYGEKVRGILVAPSLTEGAKKLLEKEGLEFRKLEPPKNNDNKREVKQKTLDFFTPC.

This sequence belongs to the NucS endonuclease family.

The protein localises to the cytoplasm. Cleaves both 3' and 5' ssDNA extremities of branched DNA structures. This is Endonuclease NucS from Pyrococcus horikoshii (strain ATCC 700860 / DSM 12428 / JCM 9974 / NBRC 100139 / OT-3).